Here is a 179-residue protein sequence, read N- to C-terminus: MSLKDRFDRFIDYFTEDEDSSLPYEKRDEPVFTPVNSSQEPALPMNQPSQSAGTKENNITRLHARQQELANQSQRATDKVIIDVRYPRKYEDATEIVDLLAGNESILIDFQYMTEVQARRCLDYLDGACHVLAGNLKKVASTMYLLTPVNVIVNVEDIRLPDEDQQGEFGFDMKRNRVR.

Residues 18–55 (EDSSLPYEKRDEPVFTPVNSSQEPALPMNQPSQSAGTK) form a disordered region. Residues 34 to 55 (PVNSSQEPALPMNQPSQSAGTK) show a composition bias toward polar residues.

This sequence belongs to the SepF family. In terms of assembly, homodimer. Interacts with FtsZ.

It localises to the cytoplasm. Its function is as follows. Cell division protein that is part of the divisome complex and is recruited early to the Z-ring. Probably stimulates Z-ring formation, perhaps through the cross-linking of FtsZ protofilaments. Its function overlaps with FtsA. The chain is Cell division protein SepF from Streptococcus pneumoniae (strain ATCC 700669 / Spain 23F-1).